The primary structure comprises 231 residues: Fibrillarin-like rRNA/tRNA 2'-O-methyltransferase (231 aa).

S-adenosyl-L-methionine contacts are provided by residues 89-90 (TT), 108-109 (EF), 133-134 (DA), and 153-156 (DIAQ).

Belongs to the methyltransferase superfamily. Fibrillarin family. As to quaternary structure, interacts with nop5. Component of box C/D small ribonucleoprotein (sRNP) particles that contain rpl7ae, FlpA and nop5, plus a guide RNA.

Involved in pre-rRNA and tRNA processing. Utilizes the methyl donor S-adenosyl-L-methionine to catalyze the site-specific 2'-hydroxyl methylation of ribose moieties in rRNA and tRNA. Site specificity is provided by a guide RNA that base pairs with the substrate. Methylation occurs at a characteristic distance from the sequence involved in base pairing with the guide RNA. In Sulfolobus acidocaldarius (strain ATCC 33909 / DSM 639 / JCM 8929 / NBRC 15157 / NCIMB 11770), this protein is Fibrillarin-like rRNA/tRNA 2'-O-methyltransferase.